Reading from the N-terminus, the 165-residue chain is Urease accessory protein UreE (165 aa).

This sequence belongs to the UreE family.

The protein resides in the cytoplasm. Functionally, involved in urease metallocenter assembly. Binds nickel. Probably functions as a nickel donor during metallocenter assembly. The sequence is that of Urease accessory protein UreE from Micrococcus luteus (strain ATCC 4698 / DSM 20030 / JCM 1464 / CCM 169 / CCUG 5858 / IAM 1056 / NBRC 3333 / NCIMB 9278 / NCTC 2665 / VKM Ac-2230) (Micrococcus lysodeikticus).